Reading from the N-terminus, the 74-residue chain is Translation initiation factor IF-1 (74 aa).

The S1-like domain maps to 1–73; that stretch reads MAKKDDIIEF…TKGRITYRGK (73 aa).

This sequence belongs to the IF-1 family. Component of the 30S ribosomal translation pre-initiation complex which assembles on the 30S ribosome in the order IF-2 and IF-3, IF-1 and N-formylmethionyl-tRNA(fMet); mRNA recruitment can occur at any time during PIC assembly.

It localises to the cytoplasm. One of the essential components for the initiation of protein synthesis. Stabilizes the binding of IF-2 and IF-3 on the 30S subunit to which N-formylmethionyl-tRNA(fMet) subsequently binds. Helps modulate mRNA selection, yielding the 30S pre-initiation complex (PIC). Upon addition of the 50S ribosomal subunit IF-1, IF-2 and IF-3 are released leaving the mature 70S translation initiation complex. The chain is Translation initiation factor IF-1 from Psychrobacter sp. (strain PRwf-1).